The following is a 1006-amino-acid chain: DNA polymerase (1006 aa).

Belongs to the DNA polymerase type-B family. In terms of assembly, interacts with OPG148. Component of the Uracil-DNA glycosylase(UDG)-OPG148-polymerase complex; OPG148 and OPG116/UDG form a heterodimeric processivity factor that associates with OPG071 to form the processive polymerase holoenzyme.

It carries out the reaction DNA(n) + a 2'-deoxyribonucleoside 5'-triphosphate = DNA(n+1) + diphosphate. Catalyzes DNA synthesis. Acquires processivity by associating with a heterodimeric processivity factor comprised of the viral OPG148 and OPG116 proteins, thereby forming the DNA polymerase holoenzyme. Displays 3'- to 5' exonuclease activity. Might participate in viral DNA recombination. Does not perform OPG116/D4synthesis across an abasic site. This is DNA polymerase (OPG071) from Homo sapiens (Human).